A 455-amino-acid chain; its full sequence is Regulatory protein LuxO (455 aa).

Residues 1–112 (MVEDTASVAA…RLRVTVNNAI (112 aa)) enclose the Response regulatory domain. Asp-47 carries the 4-aspartylphosphate modification. Residues 132–361 (FIGSSQTMQA…LQNVLRNVVV (230 aa)) enclose the Sigma-54 factor interaction domain. Residues 160–167 (GESGTGKE) and 223–232 (ADGGTLFLDE) each bind ATP.

Its function is as follows. Involved in the regulation of different processes depending on the cell density. Acts together with sigma-54 to repress, perhaps indirectly, some genes. The protein is Regulatory protein LuxO (luxO) of Vibrio cholerae serotype O1 (strain ATCC 39315 / El Tor Inaba N16961).